We begin with the raw amino-acid sequence, 553 residues long: Zinc finger CCHC domain-containing protein 8 homolog (553 aa).

The residue at position 59 (serine 59) is a Phosphoserine. Residues 183-200 form a CCHC-type zinc finger; sequence SSCFNCGDTEHSLRDCTK. 2 positions are modified to phosphoserine: serine 292 and serine 347. Tyrosine 356 bears the Phosphotyrosine mark. A disordered region spans residues 388-492; it reads LEEETEDPPL…APSTPFKASY (105 aa). The span at 395–409 shows a compositional bias: pro residues; that stretch reads PPLPPSVPPPQPPPP. A phosphoserine mark is found at serine 421 and serine 423. Polar residues-rich tracts occupy residues 444–456 and 473–485; these read ASHN…SKSP and ESGN…SAPS.

This sequence belongs to the ZCCHC8 family.

The protein resides in the nucleus. The protein localises to the nucleoplasm. Its function is as follows. Scaffolding subunit of the trimeric nuclear exosome targeting (NEXT) complex, a complex that directs a subset of non-coding short-lived RNAs for exosomal degradation. The RNA exosome is fundamental for the degradation of RNA in eukaryotic nuclei. May be involved in pre-mRNA splicing. The protein is Zinc finger CCHC domain-containing protein 8 homolog of Drosophila melanogaster (Fruit fly).